The sequence spans 130 residues: Large ribosomal subunit protein eL32 (130 aa).

S40 is subject to Phosphoserine.

This sequence belongs to the eukaryotic ribosomal protein eL32 family. Component of the large ribosomal subunit (LSU). Mature yeast ribosomes consist of a small (40S) and a large (60S) subunit. The 40S small subunit contains 1 molecule of ribosomal RNA (18S rRNA) and 33 different proteins (encoded by 57 genes). The large 60S subunit contains 3 rRNA molecules (25S, 5.8S and 5S rRNA) and 46 different proteins (encoded by 81 genes).

It is found in the cytoplasm. Component of the ribosome, a large ribonucleoprotein complex responsible for the synthesis of proteins in the cell. The small ribosomal subunit (SSU) binds messenger RNAs (mRNAs) and translates the encoded message by selecting cognate aminoacyl-transfer RNA (tRNA) molecules. The large subunit (LSU) contains the ribosomal catalytic site termed the peptidyl transferase center (PTC), which catalyzes the formation of peptide bonds, thereby polymerizing the amino acids delivered by tRNAs into a polypeptide chain. The nascent polypeptides leave the ribosome through a tunnel in the LSU and interact with protein factors that function in enzymatic processing, targeting, and the membrane insertion of nascent chains at the exit of the ribosomal tunnel. The polypeptide is Large ribosomal subunit protein eL32 (Saccharomyces cerevisiae (strain ATCC 204508 / S288c) (Baker's yeast)).